The following is a 405-amino-acid chain: Serpin H1 (405 aa).

An N-terminal signal peptide occupies residues Met-1–Ala-15. Asn-107 and Asn-112 each carry an N-linked (GlcNAc...) asparagine glycan. The Prevents secretion from ER signature appears at Arg-402 to Leu-405.

The protein belongs to the serpin family.

Its subcellular location is the endoplasmic reticulum lumen. Binds specifically to collagen. Could be involved as a chaperone in the biosynthetic pathway of collagen. In Gallus gallus (Chicken), this protein is Serpin H1 (SERPINH1).